Reading from the N-terminus, the 309-residue chain is HPr kinase/phosphorylase (309 aa).

Residues His138 and Lys159 contribute to the active site. 153–160 (GKSGIGKS) provides a ligand contact to ATP. A Mg(2+)-binding site is contributed by Ser160. The active-site Proton acceptor; for phosphorylation activity. Proton donor; for dephosphorylation activity is the Asp177. The tract at residues 201 to 210 (IEVRGIGILD) is important for the catalytic mechanism of both phosphorylation and dephosphorylation. A Mg(2+)-binding site is contributed by Glu202. The active site involves Arg243. The important for the catalytic mechanism of dephosphorylation stretch occupies residues 264–269 (PIKPAR).

This sequence belongs to the HPrK/P family. As to quaternary structure, homohexamer. Mg(2+) serves as cofactor.

The enzyme catalyses [HPr protein]-L-serine + ATP = [HPr protein]-O-phospho-L-serine + ADP + H(+). It catalyses the reaction [HPr protein]-O-phospho-L-serine + phosphate + H(+) = [HPr protein]-L-serine + diphosphate. Functionally, catalyzes the ATP- as well as the pyrophosphate-dependent phosphorylation of a specific serine residue in HPr, a phosphocarrier protein of the phosphoenolpyruvate-dependent sugar phosphotransferase system (PTS). HprK/P also catalyzes the pyrophosphate-producing, inorganic phosphate-dependent dephosphorylation (phosphorolysis) of seryl-phosphorylated HPr (P-Ser-HPr). The two antagonistic activities of HprK/P are regulated by several intracellular metabolites, which change their concentration in response to the absence or presence of rapidly metabolisable carbon sources (glucose, fructose, etc.) in the growth medium. Therefore, by controlling the phosphorylation state of HPr, HPrK/P is a sensor enzyme that plays a major role in the regulation of carbon metabolism and sugar transport: it mediates carbon catabolite repression (CCR), and regulates PTS-catalyzed carbohydrate uptake and inducer exclusion. This is HPr kinase/phosphorylase from Alkaliphilus metalliredigens (strain QYMF).